Reading from the N-terminus, the 533-residue chain is RNA end formation protein 2 (533 aa).

Disordered regions lie at residues 187 to 254 (SNST…SSMK), 260 to 279 (LFNK…SKKK), and 321 to 344 (SSST…PLKK). Positions 206–222 (KIKDSEKEKEKEKDKSK) are enriched in basic and acidic residues. Over residues 242 to 252 (SSPSPTASTSS) the composition is skewed to low complexity. Low complexity predominate over residues 321–338 (SSSTSGSSTTTVATPASS).

As to quaternary structure, interacts with FIR1. Component of the cleavage and polyadenylation factor (CPF) complex, which is composed of PTI1, SYC1, SSU72, GLC7, MPE1, REF2, PFS2, PTA1, YSH1/BRR5, SWD2, CFT2/YDH1, YTH1, CFT1/YHH1, FIP1 and PAP1. Component of the APT complex, which is a subcomplex of CPF, and is composed of PTI1, SYC1, SSU72, GLC7, REF2, PTA1 and SWD2.

It is found in the nucleus. In terms of biological role, RNA-binding component of the cleavage and polyadenylation factor (CPF) complex, which plays a key role in polyadenylation-dependent pre-mRNA 3'-end formation and cooperates with cleavage factors including the CFIA complex and NAB4/CFIB. Negative regulator of poly(A) synthesis. Component of the APT complex, which may be involved in polyadenylation-independent transcript 3'-end formation. REF2 is required for 3'-end formation of snoRNAs. The chain is RNA end formation protein 2 (REF2) from Saccharomyces cerevisiae (strain ATCC 204508 / S288c) (Baker's yeast).